The following is a 245-amino-acid chain: Probable phosphatase YcdX (245 aa).

Zn(2+) is bound by residues His7, His9, His15, His40, Glu73, His101, His131, Asp192, and His194.

It belongs to the PHP family. As to quaternary structure, homotrimer. Zn(2+) is required as a cofactor.

This Escherichia coli O81 (strain ED1a) protein is Probable phosphatase YcdX.